The primary structure comprises 85 residues: U4-theraphotoxin-Hhn1w (85 aa).

The signal sequence occupies residues 1 to 22; sequence MKVTLIAILTCAAVLALHTTAA. Residues 23-48 constitute a propeptide that is removed on maturation; sequence EELEAESQLMEVGMPDTELAAVDEER. 3 disulfide bridges follow: cysteine 52/cysteine 66, cysteine 56/cysteine 77, and cysteine 71/cysteine 82.

This sequence belongs to the neurotoxin 12 (Hwtx-2) family. 02 (Hwtx-2) subfamily. As to expression, expressed by the venom gland.

The protein resides in the secreted. Its function is as follows. Postsynaptic neurotoxin. The protein is U4-theraphotoxin-Hhn1w of Cyriopagopus hainanus (Chinese bird spider).